Reading from the N-terminus, the 656-residue chain is Protein sly1 homolog (656 aa).

Tandem repeats lie at residues Asp-85 to Ala-121, Arg-203 to Gln-245, Leu-419 to Arg-456, and Gln-460 to Thr-496. Positions Asp-85–Thr-496 are 4 X approximate repeats.

The protein belongs to the STXBP/unc-18/SEC1 family.

Its subcellular location is the cytoplasm. It is found in the membrane. Non-vital for development. The chain is Protein sly1 homolog (Slh) from Drosophila virilis (Fruit fly).